Here is a 360-residue protein sequence, read N- to C-terminus: Phospho-N-acetylmuramoyl-pentapeptide-transferase (360 aa).

Transmembrane regions (helical) follow at residues 3–23 (SILV…PYLI), 52–72 (MGGV…HLTV), 81–101 (GLLV…DDFI), 115–135 (AKLV…MQFA), 153–173 (ITVI…AISG), 187–207 (LAGG…FWQF), 230–250 (IALV…WNAA), 254–274 (IFMG…LSMV), 282–302 (IIIG…IVVF), and 333–353 (FWVL…ADWL).

This sequence belongs to the glycosyltransferase 4 family. MraY subfamily. It depends on Mg(2+) as a cofactor.

Its subcellular location is the cell membrane. The catalysed reaction is UDP-N-acetyl-alpha-D-muramoyl-L-alanyl-gamma-D-glutamyl-meso-2,6-diaminopimeloyl-D-alanyl-D-alanine + di-trans,octa-cis-undecaprenyl phosphate = di-trans,octa-cis-undecaprenyl diphospho-N-acetyl-alpha-D-muramoyl-L-alanyl-D-glutamyl-meso-2,6-diaminopimeloyl-D-alanyl-D-alanine + UMP. It participates in cell wall biogenesis; peptidoglycan biosynthesis. Its function is as follows. Catalyzes the initial step of the lipid cycle reactions in the biosynthesis of the cell wall peptidoglycan: transfers peptidoglycan precursor phospho-MurNAc-pentapeptide from UDP-MurNAc-pentapeptide onto the lipid carrier undecaprenyl phosphate, yielding undecaprenyl-pyrophosphoryl-MurNAc-pentapeptide, known as lipid I. This Saccharopolyspora erythraea (strain ATCC 11635 / DSM 40517 / JCM 4748 / NBRC 13426 / NCIMB 8594 / NRRL 2338) protein is Phospho-N-acetylmuramoyl-pentapeptide-transferase.